The sequence spans 259 residues: UPF0246 protein PFLU_0992 (259 aa).

The protein belongs to the UPF0246 family.

This chain is UPF0246 protein PFLU_0992, found in Pseudomonas fluorescens (strain SBW25).